The sequence spans 120 residues: Large ribosomal subunit protein bL12 (120 aa).

The protein belongs to the bacterial ribosomal protein bL12 family. As to quaternary structure, homodimer. Part of the ribosomal stalk of the 50S ribosomal subunit. Forms a multimeric L10(L12)X complex, where L10 forms an elongated spine to which 2 to 4 L12 dimers bind in a sequential fashion. Binds GTP-bound translation factors.

Its function is as follows. Forms part of the ribosomal stalk which helps the ribosome interact with GTP-bound translation factors. Is thus essential for accurate translation. The protein is Large ribosomal subunit protein bL12 of Listeria welshimeri serovar 6b (strain ATCC 35897 / DSM 20650 / CCUG 15529 / CIP 8149 / NCTC 11857 / SLCC 5334 / V8).